A 157-amino-acid polypeptide reads, in one-letter code: Transcriptional regulator MraZ (157 aa).

2 consecutive SpoVT-AbrB domains span residues 7-52 (TYTM…AGGN) and 83-126 (SETL…EPER).

Belongs to the MraZ family. As to quaternary structure, forms oligomers.

It localises to the cytoplasm. The protein localises to the nucleoid. The polypeptide is Transcriptional regulator MraZ (Xanthobacter autotrophicus (strain ATCC BAA-1158 / Py2)).